The primary structure comprises 316 residues: Protein lifeguard 2 (316 aa).

Positions 1–53 are disordered; the sequence is MTQGKLSVANKAPGTEGQQQVHGEKKEAPAVPSAPPSYEEATSGEGMKAGAFP. The next 3 helical transmembrane spans lie at 106-126, 138-158, and 165-185; these read VYTILLIQLLVTLAVVALFTF, PGWYWASYAVFFATYLTLACC, and FPWNLILLTVFTLSMAYLTGM. Residue asparagine 191 is glycosylated (N-linked (GlcNAc...) asparagine). A run of 4 helical transmembrane segments spans residues 194–214, 225–245, 250–270, and 290–310; these read SVLLCLGITALVCLSVTVFSF, GVLFVLLMTLFFSGLILAILL, VPWLHAVYAALGAGVFTLFLA, and IFGALNIYLDIIYIFTFFLQL.

This sequence belongs to the BI1 family. LFG subfamily. As to quaternary structure, interacts with FAS/TNFRSF6 and BAX. In terms of tissue distribution, highly expressed in breast carcinoma tissues. Enhanced expression correlates with the grade of the tumor (grade II/grade III) in primary breast tumors (at protein level). Widely expressed. Expressed at high levels in the brain especially in the hippocampus.

It localises to the cell membrane. The protein localises to the membrane raft. It is found in the postsynaptic cell membrane. Functionally, antiapoptotic protein which protects cells uniquely from Fas-induced apoptosis. Regulates Fas-mediated apoptosis in neurons by interfering with caspase-8 activation. May play a role in cerebellar development by affecting cerebellar size, internal granular layer (IGL) thickness, and Purkinje cell (PC) development. This is Protein lifeguard 2 (FAIM2) from Homo sapiens (Human).